A 169-amino-acid chain; its full sequence is Putative phosphoesterase SAR0985 (169 aa).

H34 serves as the catalytic Proton donor. 2 consecutive short sequence motifs (HXTX) follow at residues 34 to 37 (HVTI) and 115 to 118 (HFTI). H115 serves as the catalytic Proton acceptor.

It belongs to the 2H phosphoesterase superfamily. YjcG family.

This is Putative phosphoesterase SAR0985 from Staphylococcus aureus (strain MRSA252).